Reading from the N-terminus, the 970-residue chain is Probable histidine kinase 6 (970 aa).

Over 1-12 the chain is Cytoplasmic; sequence MGKPEARSGWRN. A helical membrane pass occupies residues 13–33; the sequence is AAAAAWVLVAVACAAYMHWHL. Residues 34–306 lie on the Extracellular side of the membrane; the sequence is RRETMDRAEE…YRQKPPLPWS (273 aa). One can recognise a CHASE domain in the interval 82 to 294; the sequence is FPSAIDQDTF…GDPFRAHEMR (213 aa). A helical membrane pass occupies residues 307–327; it reads AITNPLGTFVIWMLVGYIICA. Topologically, residues 328–970 are cytoplasmic; the sequence is AWSRYDKVSE…LVVGTKESAV (643 aa). The region spanning 362–651 is the Histidine kinase domain; it reads TVSHEIRTPM…TFTFSAVLKR (290 aa). Residue H365 is modified to Phosphohistidine; by autocatalysis. Response regulatory domains lie at 676–802 and 827–962; these read KAIL…QQLL and NILI…SRLV. D877 is subject to 4-aspartylphosphate.

Post-translationally, activation probably requires a transfer of a phosphate group between a His in the transmitter domain and an Asp of the receiver domain. In terms of tissue distribution, highly expressed in spikelets and at lower levels in roots, young leaves, mature leaves and stems.

The protein localises to the cell membrane. It carries out the reaction ATP + protein L-histidine = ADP + protein N-phospho-L-histidine.. In terms of biological role, cytokinin receptor related to bacterial two-component regulators. Functions as a histidine kinase and transmits the stress signal to a downstream MAPK cascade. The protein is Probable histidine kinase 6 of Oryza sativa subsp. japonica (Rice).